Reading from the N-terminus, the 1207-residue chain is DNA-directed RNA polymerase subunit beta' (1207 aa).

Zn(2+) is bound by residues cysteine 60, cysteine 62, cysteine 75, and cysteine 78. Aspartate 450, aspartate 452, and aspartate 454 together coordinate Mg(2+). Zn(2+)-binding residues include cysteine 818, cysteine 892, cysteine 899, and cysteine 902.

It belongs to the RNA polymerase beta' chain family. In terms of assembly, the RNAP catalytic core consists of 2 alpha, 1 beta, 1 beta' and 1 omega subunit. When a sigma factor is associated with the core the holoenzyme is formed, which can initiate transcription. It depends on Mg(2+) as a cofactor. Zn(2+) is required as a cofactor.

It catalyses the reaction RNA(n) + a ribonucleoside 5'-triphosphate = RNA(n+1) + diphosphate. Its function is as follows. DNA-dependent RNA polymerase catalyzes the transcription of DNA into RNA using the four ribonucleoside triphosphates as substrates. This chain is DNA-directed RNA polymerase subunit beta', found in Lactococcus lactis subsp. cremoris (strain MG1363).